A 46-amino-acid polypeptide reads, in one-letter code: Spectrin alpha chain, non-erythrocytic 1 (46 aa).

Spectrin repeat units lie at residues 1–5, 7–14, 15–20, 21–26, 27–35, and 39–46; these read AQLAD, FHLQQFFR, SQLLGS, AHEVQR, LAQFVEHWK, and DLFLTFAK.

It belongs to the spectrin family. In terms of assembly, associates with the gamma-tubulin complex in brain, but not in kidney, liver, sperm, or uterus. Like erythrocyte spectrin, the spectrin-like proteins are capable of forming dimers which can further associate to tetramers. Interacts with isoform 1 of ACP1. Interacts with CALM and EMD. Interacts (via C-terminal spectrin repeats) with TRPC4. Identified in a complex with ACTN4, CASK, IQGAP1, MAGI2, NPHS1 and SPTBN1. Interacts with CLN3; this interaction regulates the fodrin localization at the plasma membrane.

It is found in the cytoplasm. The protein localises to the cytoskeleton. Its subcellular location is the cell cortex. In terms of biological role, fodrin, which seems to be involved in secretion, interacts with calmodulin in a calcium-dependent manner and is thus candidate for the calcium-dependent movement of the cytoskeleton at the membrane. The polypeptide is Spectrin alpha chain, non-erythrocytic 1 (SPTAN1) (Capra hircus (Goat)).